The following is a 303-amino-acid chain: 2-dehydropantoate 2-reductase (303 aa).

Residues 7-12 (GCGALG), Asn-98, and Ala-122 each bind NADP(+). A substrate-binding site is contributed by Asn-98. The active-site Proton donor is the Lys-176. Substrate-binding residues include Asn-180, Asn-184, Asn-194, and Ser-244. Residue Glu-256 coordinates NADP(+).

Belongs to the ketopantoate reductase family. In terms of assembly, monomer.

It is found in the cytoplasm. The catalysed reaction is (R)-pantoate + NADP(+) = 2-dehydropantoate + NADPH + H(+). It functions in the pathway cofactor biosynthesis; (R)-pantothenate biosynthesis; (R)-pantoate from 3-methyl-2-oxobutanoate: step 2/2. Functionally, catalyzes the NADPH-dependent reduction of ketopantoate into pantoic acid. This Salmonella typhi protein is 2-dehydropantoate 2-reductase (panE).